A 149-amino-acid polypeptide reads, in one-letter code: Nucleoside diphosphate kinase (149 aa).

Lys-9, Phe-57, Arg-85, Thr-91, Arg-102, and Asn-112 together coordinate ATP. The active-site Pros-phosphohistidine intermediate is the His-115.

It belongs to the NDK family. Homotetramer. Requires Mg(2+) as cofactor.

The protein resides in the cytoplasm. The catalysed reaction is a 2'-deoxyribonucleoside 5'-diphosphate + ATP = a 2'-deoxyribonucleoside 5'-triphosphate + ADP. It carries out the reaction a ribonucleoside 5'-diphosphate + ATP = a ribonucleoside 5'-triphosphate + ADP. In terms of biological role, major role in the synthesis of nucleoside triphosphates other than ATP. The ATP gamma phosphate is transferred to the NDP beta phosphate via a ping-pong mechanism, using a phosphorylated active-site intermediate. In Gloeobacter violaceus (strain ATCC 29082 / PCC 7421), this protein is Nucleoside diphosphate kinase.